Reading from the N-terminus, the 146-residue chain is NADH-quinone oxidoreductase subunit A (146 aa).

A run of 3 helical transmembrane segments spans residues 14–34 (FAVF…GAFF), 66–86 (FYLV…LYAW), and 96–116 (VGFI…VYLV).

It belongs to the complex I subunit 3 family. NDH-1 is composed of 13 different subunits. Subunits NuoA, H, J, K, L, M, N constitute the membrane sector of the complex.

Its subcellular location is the cell inner membrane. It carries out the reaction a quinone + NADH + 5 H(+)(in) = a quinol + NAD(+) + 4 H(+)(out). Functionally, NDH-1 shuttles electrons from NADH, via FMN and iron-sulfur (Fe-S) centers, to quinones in the respiratory chain. The immediate electron acceptor for the enzyme in this species is believed to be ubiquinone. Couples the redox reaction to proton translocation (for every two electrons transferred, four hydrogen ions are translocated across the cytoplasmic membrane), and thus conserves the redox energy in a proton gradient. In Serratia proteamaculans (strain 568), this protein is NADH-quinone oxidoreductase subunit A.